We begin with the raw amino-acid sequence, 122 residues long: MIQPQTHLNVADNSGARELMCIRIIGASNRRYAHIGDVIVAVIKEAVPNMPLERSEVVRAVIVRTCKELKRDNGMIIRYDDNAAVVIDQEGNPKGTRIFGAIARELRQLNFTKIVSLAPEVL.

This sequence belongs to the universal ribosomal protein uL14 family. In terms of assembly, part of the 50S ribosomal subunit.

The protein localises to the plastid. Its subcellular location is the chloroplast. Its function is as follows. Binds to 23S rRNA. This Coffea arabica (Arabian coffee) protein is Large ribosomal subunit protein uL14c.